Here is a 320-residue protein sequence, read N- to C-terminus: Probable cell division protein WhiA (320 aa).

Positions 282–315 (TLKELGEMLSPAIGKSGVNHRLRKIDEIATKLQE) form a DNA-binding region, H-T-H motif.

This sequence belongs to the WhiA family.

Functionally, involved in cell division and chromosome segregation. The chain is Probable cell division protein WhiA from Alkaliphilus oremlandii (strain OhILAs) (Clostridium oremlandii (strain OhILAs)).